Consider the following 145-residue polypeptide: Ribosome maturation factor RimP (145 aa).

The protein belongs to the RimP family.

It is found in the cytoplasm. In terms of biological role, required for maturation of 30S ribosomal subunits. The protein is Ribosome maturation factor RimP of Borreliella afzelii (strain PKo) (Borrelia afzelii).